The chain runs to 321 residues: Epiphycan (321 aa).

Positions Met-1–Thr-19 are cleaved as a signal peptide. Thr-60 is a glycosylation site (O-linked (GalNAc...) threonine). The O-linked (Xyl...) (dermatan sulfate) serine glycan is linked to Ser-64. Residues Ser-64–Pro-100 are disordered. A compositionally biased stretch (acidic residues) spans Glu-77 to Glu-86. Ser-95 carries O-linked (GalNAc...) serine glycosylation. Residues Val-105–Lys-142 enclose the LRRNT domain. Cys-117 and Cys-129 are disulfide-bonded. LRR repeat units follow at residues Asn-143–Ser-164, Asp-167–Lys-188, Gln-191–Leu-212, Asp-237–Glu-257, and Asn-258–Asn-279. Cys-278 and Cys-311 are oxidised to a cystine. Asn-282 carries N-linked (GlcNAc...) asparagine glycosylation. One copy of the LRR 6 repeat lies at Ala-289–Tyr-309.

It belongs to the small leucine-rich proteoglycan (SLRP) family. SLRP class III subfamily. In terms of processing, a long and a short form present in approximately equimolar amounts may arise by proteolysis or cleavage by exopeptidases. The O-linked polysaccharides on Thr-60 and Ser-95 are probably the mucin type linked to GalNAc. There is one glycosaminoglycan chain, known to be dermatan sulfate, and it is probably the O-glycosylation at Ser-64. Preferentially expressed in the zone of flattened chondrocytes of the developing limb cartilage.

The protein resides in the secreted. Its subcellular location is the extracellular space. It localises to the extracellular matrix. Functionally, may have a role in bone formation and also in establishing the ordered structure of cartilage through matrix organization. This Bos taurus (Bovine) protein is Epiphycan (EPYC).